Reading from the N-terminus, the 809-residue chain is Leucine--tRNA ligase (809 aa).

The 'HIGH' region motif lies at 40–50 (PYPSGRIHMGH). The 'KMSKS' region signature appears at 579-583 (KMSKS). K582 is an ATP binding site.

The protein belongs to the class-I aminoacyl-tRNA synthetase family.

The protein resides in the cytoplasm. It catalyses the reaction tRNA(Leu) + L-leucine + ATP = L-leucyl-tRNA(Leu) + AMP + diphosphate. This Campylobacter jejuni (strain RM1221) protein is Leucine--tRNA ligase.